Here is a 395-residue protein sequence, read N- to C-terminus: Acetate kinase (395 aa).

Mg(2+) is bound at residue N7. An ATP-binding site is contributed by K14. R90 is a binding site for substrate. Catalysis depends on D147, which acts as the Proton donor/acceptor. ATP is bound by residues 207 to 211, 282 to 284, and 330 to 334; these read HLGNG, DFR, and GLGEN. E383 contacts Mg(2+).

Belongs to the acetokinase family. In terms of assembly, homodimer. The cofactor is Mg(2+). It depends on Mn(2+) as a cofactor.

It is found in the cytoplasm. The enzyme catalyses acetate + ATP = acetyl phosphate + ADP. The protein operates within metabolic intermediate biosynthesis; acetyl-CoA biosynthesis; acetyl-CoA from acetate: step 1/2. Catalyzes the formation of acetyl phosphate from acetate and ATP. Can also catalyze the reverse reaction. The protein is Acetate kinase of Lachnoclostridium phytofermentans (strain ATCC 700394 / DSM 18823 / ISDg) (Clostridium phytofermentans).